The sequence spans 551 residues: MNRRRFIKGSMAMAAVCGSSGIASLFSQAAFAAESDIADGKIVRFDFAGLQSMAQALAKKPWGGAPGPLPDTLANLTPQAYNSIQYDAAHSLWNGVANRQLDIQFFHVGMGFRRRVRMFSVDTTTHLAREIHFRPELFKYNDAGVDTTQLEGQSDLGFAGFRVFKAPELARRDVVSFLGASYFRAVDDTYQYGLSARGLAIDTYTDGQEEFPDFTAFWFDTAKPGDTTFTVYALLDSASVTGAYKFVIHCEKTQVIMDVENHLYARKDIKQLGIAPMTSMFSCGNNERRVCDTIHPQIHDSDRLAMWRGNGEWICRPLNNPQKLQFNAYMDDNPKGFGLLQLDRDFSHYQDVMDWYNKRPSLWVEPRSKWGKGAVSLMEIPTTGETLDNVVCFWQPEKAIKAGDTLVFNYRLYWSAQPPVQSPLARVMATRTGMGGFPEGWAPGEHYPDKWARRFAIDFVGGDLKAAAPKSIEPVITLSSGEAKQVEILYVEPFDGYRIQFDWYPTSDSTAPVDMRMFLRCQGEAISETWLYQYFPPAPDKRRYVDDRIMR.

Positions 1 to 32 (MNRRRFIKGSMAMAAVCGSSGIASLFSQAAFA) form a signal peptide, tat-type signal.

It belongs to the OpgD/OpgG family. Predicted to be exported by the Tat system. The position of the signal peptide cleavage has not been experimentally proven.

The protein localises to the periplasm. Its pathway is glycan metabolism; osmoregulated periplasmic glucan (OPG) biosynthesis. In terms of biological role, probably involved in the control of the structural glucose backbone of osmoregulated periplasmic glucans (OPGs). The chain is Glucans biosynthesis protein D from Salmonella paratyphi A (strain ATCC 9150 / SARB42).